The primary structure comprises 330 residues: Fructose-1,6-bisphosphatase class 1 (330 aa).

4 residues coordinate Mg(2+): glutamate 84, aspartate 103, leucine 105, and aspartate 106. Substrate is bound by residues 106–109 (DGSS), asparagine 196, and lysine 262. Glutamate 268 is a binding site for Mg(2+).

The protein belongs to the FBPase class 1 family. Homotetramer. It depends on Mg(2+) as a cofactor.

It localises to the cytoplasm. It catalyses the reaction beta-D-fructose 1,6-bisphosphate + H2O = beta-D-fructose 6-phosphate + phosphate. Its pathway is carbohydrate biosynthesis; gluconeogenesis. This Shewanella frigidimarina (strain NCIMB 400) protein is Fructose-1,6-bisphosphatase class 1.